A 137-amino-acid chain; its full sequence is Protein cornichon homolog 3 (137 aa).

3 consecutive transmembrane segments (helical) span residues 8-28 (IISF…LISL), 54-74 (ILQG…MALL), and 113-133 (LAYI…STLD).

This sequence belongs to the cornichon family.

It localises to the membrane. The polypeptide is Protein cornichon homolog 3 (Arabidopsis thaliana (Mouse-ear cress)).